Reading from the N-terminus, the 159-residue chain is 18.0 kDa class I heat shock protein (159 aa).

The region spanning 45 to 159 is the sHSP domain; sequence ETAAFANTHI…PEVKSIHISG (115 aa).

This sequence belongs to the small heat shock protein (HSP20) family. Forms oligomeric structures.

It is found in the cytoplasm. This is 18.0 kDa class I heat shock protein from Daucus carota (Wild carrot).